The sequence spans 293 residues: Plant cysteine oxidase 1 (293 aa).

The Fe cation site is built by His-148, His-150, and His-211. Residues 250–293 (SEDDDVLSSEEEKEGYAWLQERDDNPEDHTNVVGALYRGPKVED) are disordered. The segment covering 251 to 262 (EDDDVLSSEEEK) has biased composition (acidic residues). The span at 269–279 (QERDDNPEDHT) shows a compositional bias: basic and acidic residues.

Belongs to the cysteine dioxygenase family. Fe(2+) serves as cofactor.

The protein resides in the nucleus. It localises to the cytoplasm. It carries out the reaction L-cysteine + O2 = 3-sulfino-L-alanine + H(+). In terms of biological role, catalyzes the oxidation of N-terminal cysteine residues (N-Cys), thus preparing the protein for N-end rule pathway-mediated proteasomal degradation, upstream of the N-end rule enzymes ATE1, ATE2 and PRT6. Controls the preparation of the group VII ethylene response factor (ERF-VII) proteins for degradation via the 26S proteasome N-end rule pathway. Acts as an oxygen sensor that controls the stability of ERF-VII proteins, which are stabilized in flooding-induced hypoxia, and regulate transcriptional adaptation to these adverse conditions. Not active on Cys located inside or at the C-terminus of a peptide. Acts redundantly with PCO2 to repress the anaerobic response. In Arabidopsis thaliana (Mouse-ear cress), this protein is Plant cysteine oxidase 1.